A 340-amino-acid chain; its full sequence is Tetraacyldisaccharide 4'-kinase (340 aa).

51–58 (HMGGAGKT) serves as a coordination point for ATP.

Belongs to the LpxK family.

The catalysed reaction is a lipid A disaccharide + ATP = a lipid IVA + ADP + H(+). Its pathway is glycolipid biosynthesis; lipid IV(A) biosynthesis; lipid IV(A) from (3R)-3-hydroxytetradecanoyl-[acyl-carrier-protein] and UDP-N-acetyl-alpha-D-glucosamine: step 6/6. Transfers the gamma-phosphate of ATP to the 4'-position of a tetraacyldisaccharide 1-phosphate intermediate (termed DS-1-P) to form tetraacyldisaccharide 1,4'-bis-phosphate (lipid IVA). The protein is Tetraacyldisaccharide 4'-kinase of Rhodopseudomonas palustris (strain ATCC BAA-98 / CGA009).